The chain runs to 721 residues: Phosphoribosylformylglycinamidine synthase subunit PurL (721 aa).

His-47 is a catalytic residue. Tyr-50 and Lys-89 together coordinate ATP. Glu-91 lines the Mg(2+) pocket. Substrate is bound by residues 92–95 (SHNH) and Arg-114. His-93 functions as the Proton acceptor in the catalytic mechanism. Asp-115 is a binding site for Mg(2+). Substrate is bound at residue Gln-238. Asp-266 contacts Mg(2+). 310–312 (ESQ) serves as a coordination point for substrate. ATP-binding residues include Asp-490 and Gly-527. Mg(2+) is bound at residue Asn-528. Substrate is bound at residue Ser-530.

It belongs to the FGAMS family. As to quaternary structure, monomer. Part of the FGAM synthase complex composed of 1 PurL, 1 PurQ and 2 PurS subunits.

Its subcellular location is the cytoplasm. The enzyme catalyses N(2)-formyl-N(1)-(5-phospho-beta-D-ribosyl)glycinamide + L-glutamine + ATP + H2O = 2-formamido-N(1)-(5-O-phospho-beta-D-ribosyl)acetamidine + L-glutamate + ADP + phosphate + H(+). It participates in purine metabolism; IMP biosynthesis via de novo pathway; 5-amino-1-(5-phospho-D-ribosyl)imidazole from N(2)-formyl-N(1)-(5-phospho-D-ribosyl)glycinamide: step 1/2. Its function is as follows. Part of the phosphoribosylformylglycinamidine synthase complex involved in the purines biosynthetic pathway. Catalyzes the ATP-dependent conversion of formylglycinamide ribonucleotide (FGAR) and glutamine to yield formylglycinamidine ribonucleotide (FGAM) and glutamate. The FGAM synthase complex is composed of three subunits. PurQ produces an ammonia molecule by converting glutamine to glutamate. PurL transfers the ammonia molecule to FGAR to form FGAM in an ATP-dependent manner. PurS interacts with PurQ and PurL and is thought to assist in the transfer of the ammonia molecule from PurQ to PurL. The chain is Phosphoribosylformylglycinamidine synthase subunit PurL from Ruegeria sp. (strain TM1040) (Silicibacter sp.).